The chain runs to 312 residues: Glyoxylate/hydroxypyruvate reductase A (312 aa).

R227 is a catalytic residue. H275 functions as the Proton donor in the catalytic mechanism.

The protein belongs to the D-isomer specific 2-hydroxyacid dehydrogenase family. GhrA subfamily.

The protein resides in the cytoplasm. The catalysed reaction is glycolate + NADP(+) = glyoxylate + NADPH + H(+). It carries out the reaction (R)-glycerate + NAD(+) = 3-hydroxypyruvate + NADH + H(+). The enzyme catalyses (R)-glycerate + NADP(+) = 3-hydroxypyruvate + NADPH + H(+). Functionally, catalyzes the NADPH-dependent reduction of glyoxylate and hydroxypyruvate into glycolate and glycerate, respectively. The protein is Glyoxylate/hydroxypyruvate reductase A of Escherichia coli O157:H7.